Consider the following 491-residue polypeptide: Serine hydroxymethyltransferase (491 aa).

Residues leucine 173 and 177–179 each bind (6S)-5,6,7,8-tetrahydrofolate; that span reads GHL. Lysine 285 carries the post-translational modification N6-(pyridoxal phosphate)lysine.

This sequence belongs to the SHMT family. In terms of assembly, homodimer. It depends on pyridoxal 5'-phosphate as a cofactor.

Its subcellular location is the cytoplasm. The enzyme catalyses (6R)-5,10-methylene-5,6,7,8-tetrahydrofolate + glycine + H2O = (6S)-5,6,7,8-tetrahydrofolate + L-serine. Its pathway is one-carbon metabolism; tetrahydrofolate interconversion. It participates in amino-acid biosynthesis; glycine biosynthesis; glycine from L-serine: step 1/1. In terms of biological role, catalyzes the reversible interconversion of serine and glycine with tetrahydrofolate (THF) serving as the one-carbon carrier. This reaction serves as the major source of one-carbon groups required for the biosynthesis of purines, thymidylate, methionine, and other important biomolecules. Also exhibits THF-independent aldolase activity toward beta-hydroxyamino acids, producing glycine and aldehydes, via a retro-aldol mechanism. The polypeptide is Serine hydroxymethyltransferase (Cutibacterium acnes (strain DSM 16379 / KPA171202) (Propionibacterium acnes)).